We begin with the raw amino-acid sequence, 206 residues long: Outer-membrane lipoprotein carrier protein (206 aa).

The signal sequence occupies residues 1 to 21; the sequence is MTRLLFVLVLSVCLLPVPVKA.

Belongs to the LolA family. In terms of assembly, monomer.

Its subcellular location is the periplasm. Functionally, participates in the translocation of lipoproteins from the inner membrane to the outer membrane. Only forms a complex with a lipoprotein if the residue after the N-terminal Cys is not an aspartate (The Asp acts as a targeting signal to indicate that the lipoprotein should stay in the inner membrane). The protein is Outer-membrane lipoprotein carrier protein of Nitrosomonas europaea (strain ATCC 19718 / CIP 103999 / KCTC 2705 / NBRC 14298).